A 309-amino-acid polypeptide reads, in one-letter code: RING finger protein mug145 (309 aa).

A helical membrane pass occupies residues 23-43 (ILLFALVIILSVIFINFFFFY). An RING-type; atypical zinc finger spans residues 205–247 (CIICYADYAFDDILRVLPCEHVFHTQCIDTWMTTMKASCPLCN).

The protein resides in the membrane. Its function is as follows. Has a role in meiosis. This is RING finger protein mug145 (mug145) from Schizosaccharomyces pombe (strain 972 / ATCC 24843) (Fission yeast).